A 165-amino-acid chain; its full sequence is Ubiquitin-fold modifier-conjugating enzyme 1 (165 aa).

Cysteine 117 acts as the Glycyl thioester intermediate in catalysis.

This sequence belongs to the ubiquitin-conjugating enzyme family. UFC1 subfamily.

Functionally, E2-like enzyme which forms an intermediate with UFM1 via a thioester linkage. In Brugia malayi (Filarial nematode worm), this protein is Ubiquitin-fold modifier-conjugating enzyme 1.